Here is a 385-residue protein sequence, read N- to C-terminus: GDSL esterase/lipase At5g08460 (385 aa).

Positions 1–35 are cleaved as a signal peptide; that stretch reads MHDSEIFKFKDMMMMSCTVQTLVLVPWFLVVFVLA. The active-site Nucleophile is the serine 56. N-linked (GlcNAc...) asparagine glycosylation is found at asparagine 218 and asparagine 285. Catalysis depends on residues aspartate 350 and histidine 353. N-linked (GlcNAc...) asparagine glycans are attached at residues asparagine 368 and asparagine 378.

Belongs to the 'GDSL' lipolytic enzyme family.

The protein resides in the secreted. This Arabidopsis thaliana (Mouse-ear cress) protein is GDSL esterase/lipase At5g08460.